A 119-amino-acid chain; its full sequence is UPF0231 protein YPTB0717 (119 aa).

It belongs to the UPF0231 family.

This chain is UPF0231 protein YPTB0717, found in Yersinia pseudotuberculosis serotype I (strain IP32953).